The chain runs to 422 residues: Replication factor C large subunit (422 aa).

An ATP-binding site is contributed by 63–70 (GPPGVGKT).

Belongs to the activator 1 small subunits family. RfcL subfamily. As to quaternary structure, heteromultimer composed of small subunits (RfcS) and large subunits (RfcL).

In terms of biological role, part of the RFC clamp loader complex which loads the PCNA sliding clamp onto DNA. The polypeptide is Replication factor C large subunit (Pyrobaculum arsenaticum (strain DSM 13514 / JCM 11321 / PZ6)).